The primary structure comprises 1151 residues: uncharacterized protein (1151 aa).

5 disordered regions span residues 611–633 (FVKG…DEEE), 709–740 (NLVP…IMEV), 753–778 (PPIL…KSIL), 795–880 (PPVI…PPKL), and 1060–1151 (LKEP…TQQE). Composition is skewed to pro residues over residues 754–773 (PILP…PQEP) and 811–842 (IVPP…PSQP). A compositionally biased stretch (low complexity) spans 867-878 (PITPDTPAITPP). A compositionally biased stretch (acidic residues) spans 1082–1091 (ESDNEDDELD). Residues 1131–1142 (PVDTSDATKIST) show a composition bias toward polar residues.

This is an uncharacterized protein from Ostreid herpesvirus 1 (isolate France) (OsHV-1).